Here is a 481-residue protein sequence, read N- to C-terminus: MLPWELARFSIVKDEVLPHFATNEDLDLANEIISLFKAGKKLGEIDEEIEYLEKIYDHKLVRAFVKLLTRLCEFELDSPIPPIQIRRELFKYGPVLDEKEREDIIQKVSKKLGADIMRFVFSDLDEEKKIIKAPTISAEDLIRWYNLSLLQTLLFKAYKLTVYVSSNWKEIIRRAKWLGLMYFAYDKPLRFEFLGPATLVKLTEKYGRNLAVLLQFIISSQNWKIEAELVLGKKFKRVYKLKLANFKELKELVIDEKRFDSSVEEKFYKDFTNVIKGWKIIREPEPLVVDNRVFIPDFLVEKGNLKVYVEIVGFWTKEYIKEKLDKLKKVKYPILILLNEELGKEKFNGMNVITYKRKIDISLVYKWLRELENKYLNEVKVDYTISGDIISLNEIASKLSLPVEVIRKNIKIFPGYIFLKNYYVSEKFLEKLRNENFDNKSLKELVSAYGDYIVEVLEFLGYKLKWQGISDAIVIKDKKVN.

The segment at 1-136 is N-terminal domain (NTD); that stretch reads MLPWELARFS…EKKIIKAPTI (136 aa). The segment at 158 to 250 is central domain (CRD); that stretch reads YKLTVYVSSN…LKLANFKELK (93 aa). The interval 260 to 364 is nuclease domain (NUS); the sequence is DSSVEEKFYK…YKRKIDISLV (105 aa). A divalent metal cation contacts are provided by Glu-265, Asp-297, and Glu-310. The interval 414 to 481 is C-terminal domain (CTD); sequence PGYIFLKNYY…AIVIKDKKVN (68 aa).

The protein belongs to the Bax1 family. Homodimer in solution, forms a heterodimer with XPB2. The cofactor is a divalent metal cation.

Its function is as follows. A dual DNA endonuclease probably involved in nucleotide excision repair (NER). The N-terminal nuclease domain (NTD) of the XPB2-Bax1 complex cleaves on one side of a DNA bubble (which presumably mimics DNA damage), while the NUS nuclease domain cleaves the other side, respectively called 5' and 3' nuclease activities. Interaction with XPB blocks the NTD nuclease activity. Binds to and stimulates the ATPase activity (and probably also helicase activity) of XPB2. Increases affinity of XPB2 for forked DNA. Does not stimulate the DNA-dependent activity of XPB1. In an XPB2-Bax1-bubble DNA crystal (12 bp of dsDNA, a 6 base bubble and 6 bp of dsDNA) the short 6 bp arm is unwound. The 2 helicase and the ThM domains of XPB2 with the NTD and CRD domains of Bax1 encircle the DNA, forming a tunnel where the 12 bp dsDNA and the ds-ssDNA junction are located. The ThM domain is wedged between the ssDNA tails, with the 5' ssDNA contacting Bax1 and the 3' ssDNA in a channel in XPB2. The nuclease domain (NUS) of Bax1 does not contact DNA in the bubble DNA complex. In Sulfurisphaera tokodaii (strain DSM 16993 / JCM 10545 / NBRC 100140 / 7) (Sulfolobus tokodaii), this protein is Endonuclease Bax1.